A 200-amino-acid chain; its full sequence is 3-isopropylmalate dehydratase small subunit (200 aa).

This sequence belongs to the LeuD family. LeuD type 1 subfamily. In terms of assembly, heterodimer of LeuC and LeuD.

It carries out the reaction (2R,3S)-3-isopropylmalate = (2S)-2-isopropylmalate. The protein operates within amino-acid biosynthesis; L-leucine biosynthesis; L-leucine from 3-methyl-2-oxobutanoate: step 2/4. Its function is as follows. Catalyzes the isomerization between 2-isopropylmalate and 3-isopropylmalate, via the formation of 2-isopropylmaleate. This Campylobacter jejuni (strain RM1221) protein is 3-isopropylmalate dehydratase small subunit.